The sequence spans 167 residues: Small ribosomal subunit protein mS25 (167 aa).

Belongs to the mitochondrion-specific ribosomal protein mS25 family. As to quaternary structure, component of the mitochondrial ribosome small subunit (28S) which comprises a 12S rRNA and about 30 distinct proteins.

It localises to the mitochondrion. The sequence is that of Small ribosomal subunit protein mS25 (mRpS25) from Drosophila melanogaster (Fruit fly).